Reading from the N-terminus, the 385-residue chain is Probable nitrate transporter NarT (385 aa).

A run of 12 helical transmembrane segments spans residues 14–34 (TLSL…MPYI), 47–67 (IILA…GYLT), 69–89 (IIGA…PIFF), 97–117 (GMLM…SVGV), 139–159 (GNIG…IIGW), 161–181 (TTVR…FIFG), 205–225 (LYYL…FGLF), 246–266 (GVFI…GDKF), 277–297 (IIMI…LFTI), 302–322 (ISIC…SYFA), 330–350 (GIVS…ITYV), and 359–379 (LAFI…GHLY).

The protein belongs to the major facilitator superfamily. Nitrate/nitrite porter (TC 2.A.1.8) family.

It is found in the cell membrane. In terms of biological role, probably required for nitrate uptake under anoxic conditions. Also possibly involved in excretion of nitrite produced by the dissimilatory reduction of nitrate. In Staphylococcus haemolyticus (strain JCSC1435), this protein is Probable nitrate transporter NarT (narT).